Reading from the N-terminus, the 140-residue chain is Iron sulfur cluster assembly protein 1 (140 aa).

The protein belongs to the NifU family. Component of the core Fe-S cluster (ISC) assembly machinery. [2Fe-2S] cluster serves as cofactor.

It is found in the mitosome matrix. It functions in the pathway cofactor biosynthesis; iron-sulfur cluster biosynthesis. Functionally, scaffold protein for the de novo synthesis of iron-sulfur (Fe-S) clusters within mitosomes, which is required for maturation of both [2Fe-2S] and [4Fe-4S] proteins. First, a [2Fe-2S] cluster is transiently assembled on the scaffold protein ISU1. In a second step, the cluster is released from ISU1, transferred to a glutaredoxin, followed by the formation of [2Fe-2S] proteins, the synthesis of [4Fe-4S] clusters and their target-specific insertion into the recipient apoproteins. Cluster assembly on ISU1 depends on the function of the cysteine desulfurase complex NFS1-ISD11, which serves as the sulfur donor for cluster synthesis, the iron-binding protein frataxin as the putative iron donor, and the electron transfer chain comprised of ferredoxin reductase and ferredoxin, which receive their electrons from NADH. The protein is Iron sulfur cluster assembly protein 1 (ISU1) of Encephalitozoon cuniculi (strain GB-M1) (Microsporidian parasite).